A 382-amino-acid chain; its full sequence is Succinyl-diaminopimelate desuccinylase (382 aa).

Position 70 (His70) interacts with Zn(2+). Asp72 is a catalytic residue. Asp103 contacts Zn(2+). Glu137 functions as the Proton acceptor in the catalytic mechanism. Zn(2+) is bound by residues Glu138, Glu166, and His355.

The protein belongs to the peptidase M20A family. DapE subfamily. As to quaternary structure, homodimer. Requires Zn(2+) as cofactor. It depends on Co(2+) as a cofactor.

The enzyme catalyses N-succinyl-(2S,6S)-2,6-diaminopimelate + H2O = (2S,6S)-2,6-diaminopimelate + succinate. It functions in the pathway amino-acid biosynthesis; L-lysine biosynthesis via DAP pathway; LL-2,6-diaminopimelate from (S)-tetrahydrodipicolinate (succinylase route): step 3/3. Functionally, catalyzes the hydrolysis of N-succinyl-L,L-diaminopimelic acid (SDAP), forming succinate and LL-2,6-diaminopimelate (DAP), an intermediate involved in the bacterial biosynthesis of lysine and meso-diaminopimelic acid, an essential component of bacterial cell walls. The polypeptide is Succinyl-diaminopimelate desuccinylase (Paracoccus denitrificans (strain Pd 1222)).